The sequence spans 154 residues: Sperm microtubule associated protein 1 (154 aa).

The polypeptide is Sperm microtubule associated protein 1 (Homo sapiens (Human)).